We begin with the raw amino-acid sequence, 203 residues long: Small ribosomal subunit protein uS4 (203 aa).

The S4 RNA-binding domain occupies 93 to 154 (RRFDNVVFRA…KSKNMDAVTE (62 aa)).

This sequence belongs to the universal ribosomal protein uS4 family. Part of the 30S ribosomal subunit. Contacts protein S5. The interaction surface between S4 and S5 is involved in control of translational fidelity.

One of the primary rRNA binding proteins, it binds directly to 16S rRNA where it nucleates assembly of the body of the 30S subunit. Its function is as follows. With S5 and S12 plays an important role in translational accuracy. The polypeptide is Small ribosomal subunit protein uS4 (Prosthecochloris aestuarii (strain DSM 271 / SK 413)).